The chain runs to 53 residues: Mannose/glucose-specific lectin alpha chain (53 aa).

It belongs to the leguminous lectin family. Heterodimer of an alpha and a beta chain.

In terms of biological role, this lectin specifically binds mannose and glucose. This is Mannose/glucose-specific lectin alpha chain from Vicia cracca (Bird vetch).